Consider the following 171-residue polypeptide: CS1 fimbrial subunit A (171 aa).

Residues 1–23 form the signal peptide; sequence MKLKKTIGAMALATLFATMGASA.

Belongs to the fimbrial CS1 protein family.

The protein localises to the fimbrium. In terms of biological role, fimbriae (also called pili), polar filaments radiating from the surface of the bacterium to a length of 0.5-1.5 micrometers and numbering 100-300 per cell, enable bacteria to colonize the epithelium of specific host organs. The chain is CS1 fimbrial subunit A (csoA) from Escherichia coli.